Consider the following 697-residue polypeptide: Elongation factor G (697 aa).

Positions 8–283 (EHIRNIGICA…AVVDFLPSPT (276 aa)) constitute a tr-type G domain. GTP is bound by residues 17-24 (AHIDAGKT), 81-85 (DTPGH), and 135-138 (NKMD).

It belongs to the TRAFAC class translation factor GTPase superfamily. Classic translation factor GTPase family. EF-G/EF-2 subfamily.

It localises to the cytoplasm. In terms of biological role, catalyzes the GTP-dependent ribosomal translocation step during translation elongation. During this step, the ribosome changes from the pre-translocational (PRE) to the post-translocational (POST) state as the newly formed A-site-bound peptidyl-tRNA and P-site-bound deacylated tRNA move to the P and E sites, respectively. Catalyzes the coordinated movement of the two tRNA molecules, the mRNA and conformational changes in the ribosome. The polypeptide is Elongation factor G (Rickettsia massiliae (strain Mtu5)).